Reading from the N-terminus, the 256-residue chain is uncharacterized protein (256 aa).

A disordered region spans residues 211-256; that stretch reads RKLQASVTTTPPKRCKLADRPAQTTQDTPRAPQPAPVRAQRPLFTL. Positions 246–256 are enriched in low complexity; sequence PVRAQRPLFTL.

This is an uncharacterized protein from Orgyia pseudotsugata (Douglas-fir tussock moth).